The chain runs to 171 residues: Small ribosomal subunit protein uS4 (171 aa).

The S4 RNA-binding domain maps to 104-168; sequence RRLQTIVYKK…SPFKERAEEA (65 aa).

Belongs to the universal ribosomal protein uS4 family. Part of the 30S ribosomal subunit. Contacts protein S5. The interaction surface between S4 and S5 is involved in control of translational fidelity.

One of the primary rRNA binding proteins, it binds directly to 16S rRNA where it nucleates assembly of the body of the 30S subunit. Functionally, with S5 and S12 plays an important role in translational accuracy. This is Small ribosomal subunit protein uS4 from Aeropyrum pernix (strain ATCC 700893 / DSM 11879 / JCM 9820 / NBRC 100138 / K1).